A 325-amino-acid chain; its full sequence is Putative 1-aminocyclopropane-1-carboxylate deaminase (325 aa).

N6-(pyridoxal phosphate)lysine is present on Lys54.

The protein belongs to the ACC deaminase/D-cysteine desulfhydrase family. Requires pyridoxal 5'-phosphate as cofactor.

It carries out the reaction 1-aminocyclopropane-1-carboxylate + H2O = 2-oxobutanoate + NH4(+). The sequence is that of Putative 1-aminocyclopropane-1-carboxylate deaminase from Pyrococcus horikoshii (strain ATCC 700860 / DSM 12428 / JCM 9974 / NBRC 100139 / OT-3).